The chain runs to 474 residues: Glycogen synthase (474 aa).

Residue Lys-15 coordinates ADP-alpha-D-glucose.

It belongs to the glycosyltransferase 1 family. Bacterial/plant glycogen synthase subfamily.

The enzyme catalyses [(1-&gt;4)-alpha-D-glucosyl](n) + ADP-alpha-D-glucose = [(1-&gt;4)-alpha-D-glucosyl](n+1) + ADP + H(+). The protein operates within glycan biosynthesis; glycogen biosynthesis. Synthesizes alpha-1,4-glucan chains using ADP-glucose. This is Glycogen synthase from Chlamydia trachomatis serovar A (strain ATCC VR-571B / DSM 19440 / HAR-13).